Here is a 295-residue protein sequence, read N- to C-terminus: Elongation factor Ts (295 aa).

Residues 79-82 (TDFV) are involved in Mg(2+) ion dislocation from EF-Tu.

It belongs to the EF-Ts family.

It is found in the cytoplasm. Associates with the EF-Tu.GDP complex and induces the exchange of GDP to GTP. It remains bound to the aminoacyl-tRNA.EF-Tu.GTP complex up to the GTP hydrolysis stage on the ribosome. This is Elongation factor Ts from Bacillus cereus (strain ATCC 10987 / NRS 248).